The following is a 197-amino-acid chain: Peptidyl-tRNA hydrolase (197 aa).

Residue Tyr21 coordinates tRNA. Residue His26 is the Proton acceptor of the active site. TRNA contacts are provided by Tyr72, Asn74, and Asn120.

It belongs to the PTH family. As to quaternary structure, monomer.

It localises to the cytoplasm. The catalysed reaction is an N-acyl-L-alpha-aminoacyl-tRNA + H2O = an N-acyl-L-amino acid + a tRNA + H(+). Hydrolyzes ribosome-free peptidyl-tRNAs (with 1 or more amino acids incorporated), which drop off the ribosome during protein synthesis, or as a result of ribosome stalling. Functionally, catalyzes the release of premature peptidyl moieties from peptidyl-tRNA molecules trapped in stalled 50S ribosomal subunits, and thus maintains levels of free tRNAs and 50S ribosomes. In Saccharophagus degradans (strain 2-40 / ATCC 43961 / DSM 17024), this protein is Peptidyl-tRNA hydrolase.